The primary structure comprises 222 residues: uncharacterized protein (222 aa).

Residues N4, N75, N84, N104, N170, and N175 are each glycosylated (N-linked (GlcNAc...) asparagine; by host). The chain crosses the membrane as a helical span at residues 200–220 (LIIIIGIVIILLLIIVMIKTV).

Its subcellular location is the membrane. This is an uncharacterized protein from Acanthamoeba polyphaga (Amoeba).